Reading from the N-terminus, the 653-residue chain is Thioredoxin domain-containing protein 3 homolog (653 aa).

Residues Leu-9 to Asn-114 form the Thioredoxin domain. Cysteines 38 and 41 form a disulfide. The interval Lys-155–Thr-299 is NDK 1. Residues Tyr-300–Arg-323 form a disordered region. The span at Arg-301 to Ala-310 shows a compositional bias: low complexity. NDK stretches follow at residues Leu-324 to Val-459 and Val-459 to Trp-597. The disordered stretch occupies residues Gln-603–Glu-653. A compositionally biased stretch (acidic residues) spans Pro-617–Glu-633.

The protein in the C-terminal section; belongs to the NDK family. In terms of tissue distribution, testis-specific.

Functionally, may be required during the final stages of sperm tail maturation. May act by reducing disulfide bonds within the sperm components. The protein is Thioredoxin domain-containing protein 3 homolog (CiIC3) of Ciona intestinalis (Transparent sea squirt).